Here is a 985-residue protein sequence, read N- to C-terminus: NAD kinase 2, chloroplastic (985 aa).

A chloroplast-targeting transit peptide spans 1–62; it reads MFLCFCPCHV…KRRLRFVIRA (62 aa). Residues 335-380 are calmodulin-binding; it reads APKAEQVELFASIVSDSSKRPIYVHSKEGVWRTSAMVSRWKQYMTR. Disordered regions lie at residues 389–466 and 548–615; these read SEES…PPGN and FSNG…DEAG. Basic and acidic residues-rich tracts occupy residues 390 to 399 and 413 to 429; these read EESKRREVSE and VPDE…EVDS. Polar residues predominate over residues 548 to 569; the sequence is FSNGNVHASDNTNKSISDNRGN.

It belongs to the NAD kinase family. Expressed in leaves.

The protein localises to the plastid. It is found in the chloroplast. The enzyme catalyses NAD(+) + ATP = ADP + NADP(+) + H(+). In terms of biological role, involved in chlorophyll synthesis and chloroplast protection against oxidative damage. The chain is NAD kinase 2, chloroplastic (NADK2) from Arabidopsis thaliana (Mouse-ear cress).